A 297-amino-acid chain; its full sequence is Putative thiosulfate sulfurtransferase SseA (297 aa).

2 consecutive Rhodanese domains span residues 31–138 and 168–286; these read GAPG…ETTL and ILDA…VPIV. C245 functions as the Cysteine persulfide intermediate in the catalytic mechanism. R250 lines the substrate pocket.

The catalysed reaction is thiosulfate + hydrogen cyanide = thiocyanate + sulfite + 2 H(+). The chain is Putative thiosulfate sulfurtransferase SseA (sseA) from Mycobacterium bovis (strain ATCC BAA-935 / AF2122/97).